The primary structure comprises 147 residues: 16 kDa heat shock protein B (147 aa).

The region spanning asparagine 29–alanine 141 is the sHSP domain.

Belongs to the small heat shock protein (HSP20) family.

The sequence is that of 16 kDa heat shock protein B (ibpB) from Azotobacter vinelandii.